The chain runs to 708 residues: Solute carrier family 15 member 1 (708 aa).

Residues 1 to 21 (MGMSKSHSFFGYPLSIFFIVV) traverse the membrane as a helical segment. Over 22–53 (NEFCERFSYYGMRAILILYFTNFISWDDNLST) the chain is Extracellular. Asn-50 carries an N-linked (GlcNAc...) asparagine glycan. Residues 54 to 74 (AIYHTFVALCYLTPILGALIA) form a helical membrane-spanning segment. Over 75-82 (DSWLGKFK) the chain is Cytoplasmic. Residues 83 to 103 (TIVSLSIVYTIGQAVTSVSSI) form a helical membrane-spanning segment. At 104-118 (NDLTDHNHDGTPDSL) the chain is on the extracellular side. Residues 119–139 (PVHVVLSLIGLALIALGTGGI) traverse the membrane as a helical segment. At 140-161 (KPCVSAFGGDQFEEGQEKQRNR) the chain is on the cytoplasmic side. Residues 162-182 (FFSIFYLAINAGSLLSTIITP) form a helical membrane-spanning segment. At 183–198 (MLRVQQCGIHSKQACY) the chain is on the extracellular side. A helical membrane pass occupies residues 199-219 (PLAFGVPAALMAVALIVFVLG). The Cytoplasmic portion of the chain corresponds to 220–276 (SGMYKKFKPQGNIMGKVAKCIGFAIKNRFRHRSKAFPKREHWLDWAKEKYDERLISQ). The chain crosses the membrane as a helical span at residues 277 to 297 (IKMVTRVMFLYIPLPMFWALF). Residues 298-327 (DQQGSRWTLQATTMSGKIGALEIQPDQMQT) lie on the Extracellular side of the membrane. Residues 328–348 (VNAILIVIMVPIFDAVLYPLI) traverse the membrane as a helical segment. Topologically, residues 349 to 361 (AKCGFNFTSLKKM) are cytoplasmic. The chain crosses the membrane as a helical span at residues 362 to 382 (AVGMVLASMAFVVAAIVQVEI). Over 383-584 (DKTLPVFPKG…SANTVNMALQ (202 aa)) the chain is Extracellular. The extracellular domain (ECD) stretch occupies residues 383 to 584 (DKTLPVFPKG…SANTVNMALQ (202 aa)). Asn-404, Asn-408, Asn-439, Asn-509, Asn-514, and Asn-562 each carry an N-linked (GlcNAc...) asparagine glycan. The helical transmembrane segment at 585-605 (IPQYFLLTCGEVVFSVTGLEF) threads the bilayer. Residues 606-619 (SYSQAPSNMKSVLQ) lie on the Cytoplasmic side of the membrane. A helical transmembrane segment spans residues 620–640 (AGWLLTVAVGNIIVLIVAGAG). The Extracellular segment spans residues 641 to 645 (QFSKQ). The helical transmembrane segment at 646-666 (WAEYILFAALLLVVCVIFAIM) threads the bilayer. Residues 667 to 708 (ARFYTYINPAEIEAQFDEDEKKNRLEKSNPYFMSGANSQKQM) are Cytoplasmic-facing.

The protein belongs to the major facilitator superfamily. Proton-dependent oligopeptide transporter (POT/PTR) (TC 2.A.17) family. Interacts (via extracellular domain region) with trypsin. Expressed in small intestine.

It localises to the apical cell membrane. The enzyme catalyses a dipeptide(out) + H(+)(out) = a dipeptide(in) + H(+)(in). The catalysed reaction is an L-amino acid tripeptide(out) + H(+)(out) = an L-amino acid tripeptide(in) + H(+)(in). It catalyses the reaction L-alanyl-L-lysine(out) + H(+)(out) = L-alanyl-L-lysine(in) + H(+)(in). It carries out the reaction L-alanyl-L-proline(out) + H(+)(out) = L-alanyl-L-proline(in) + H(+)(in). The enzyme catalyses L-alanyl-L-valine(out) + H(+)(out) = L-alanyl-L-valine(in) + H(+)(in). The catalysed reaction is carnosine(out) + H(+)(out) = carnosine(in) + H(+)(in). It catalyses the reaction glycyl-L-glutamine(out) + H(+)(out) = glycyl-L-glutamine(in) + H(+)(in). It carries out the reaction glycyl-L-leucine(out) + H(+)(out) = glycyl-L-leucine(in) + H(+)(in). The enzyme catalyses glycyl-L-proline(out) + H(+)(out) = glycyl-L-proline(in) + H(+)(in). The catalysed reaction is glycyl-sarcosine(out) + H(+)(out) = glycyl-sarcosine(in) + H(+)(in). It catalyses the reaction L-leucyl-L-leucine(out) + H(+)(out) = L-leucyl-L-leucine(in) + H(+)(in). It carries out the reaction L-leucyl-L-proline(out) + H(+)(out) = L-leucyl-L-proline(in) + H(+)(in). The enzyme catalyses L-phenylalanyl-L-leucine(out) + H(+)(out) = L-phenylalanyl-L-leucine(in) + H(+)(in). The catalysed reaction is L-phenylalanyl-L-phenylalanine(out) + H(+)(out) = L-phenylalanyl-L-phenylalanine(in) + H(+)(in). It catalyses the reaction L-lysyl-glycine(out) + H(+)(out) = L-lysyl-glycine(in) + H(+)(in). It carries out the reaction L-tyrosylglycine(out) + H(+)(out) = L-tyrosylglycine(in) + H(+)(in). The enzyme catalyses L-alanyl-L-aspartate(out) + 2 H(+)(out) = L-alanyl-L-aspartate(in) + 2 H(+)(in). The catalysed reaction is L-aspartyl-glycine(out) + 2 H(+)(out) = L-aspartyl-glycine(in) + 2 H(+)(in). It catalyses the reaction glycyl-L-aspartate(out) + 2 H(+)(out) = glycyl-L-aspartate(in) + 2 H(+)(in). It carries out the reaction glycyl-L-glutamate(out) + 2 H(+)(out) = glycyl-L-glutamate(in) + 2 H(+)(in). The enzyme catalyses L-alanyl-L-leucyl-L-alanine(out) + H(+)(out) = L-alanyl-L-leucyl-L-alanine(in) + H(+)(in). The catalysed reaction is L-alanyl-L-prolylglycine(out) + H(+)(out) = L-alanyl-L-prolylglycine(in) + H(+)(in). It catalyses the reaction glycylglycyl-L-isoleucine(out) + H(+)(out) = glycylglycyl-L-isoleucine(in) + H(+)(in). It carries out the reaction glycylglycyl-L-proline(out) + H(+)(out) = glycylglycyl-L-proline(in) + H(+)(in). The enzyme catalyses L-methionyl-L-phenylalanyl-L-methionine(out) + H(+)(out) = L-methionyl-L-phenylalanyl-L-methionine(in) + H(+)(in). The catalysed reaction is N-acetyl-D-muramoyl-L-alanyl-D-isoglutamine(out) + 2 H(+)(out) = N-acetyl-D-muramoyl-L-alanyl-D-isoglutamine(in) + 2 H(+)(in). It catalyses the reaction N(alpha)-formyl-L-methionyl-L-leucyl-L-phenylalanine(out) + 2 H(+)(out) = N(alpha)-formyl-L-methionyl-L-leucyl-L-phenylalanine(in) + 2 H(+)(in). Functionally, electrogenic proton-coupled amino-acid transporter that transports oligopeptides of 2 to 4 amino acids with a preference for dipeptides. Transports neutral and monovalently charged peptides with a proton to peptide stoichiometry of 1:1 or 2:1. Primarily responsible for the absorption of dietary di- and tripeptides from the small intestinal lumen. Mediates transepithelial transport of muramyl and N-formylated bacterial dipeptides contributing to recognition of pathogenic bacteria by the mucosal immune system. The sequence is that of Solute carrier family 15 member 1 from Homo sapiens (Human).